Consider the following 235-residue polypeptide: Small ribosomal subunit protein uS3 (235 aa).

Positions 39 to 107 (VRQFLNKELA…PAQINIAEVK (69 aa)) constitute a KH type-2 domain. The interval 216-235 (QPEQQPTDKPKKVPRGKGRK) is disordered.

Belongs to the universal ribosomal protein uS3 family. Part of the 30S ribosomal subunit. Forms a tight complex with proteins S10 and S14.

Its function is as follows. Binds the lower part of the 30S subunit head. Binds mRNA in the 70S ribosome, positioning it for translation. This is Small ribosomal subunit protein uS3 from Aggregatibacter actinomycetemcomitans (Actinobacillus actinomycetemcomitans).